Here is a 217-residue protein sequence, read N- to C-terminus: Lipoprotein CseA (217 aa).

An N-terminal signal peptide occupies residues 1-34 (MRGLGTESLRARGALKAAIAAVAGLAVLGLSVSA). C35 carries the N-palmitoyl cysteine lipid modification. C35 is lipidated: S-diacylglycerol cysteine. Disordered stretches follow at residues 39 to 66 (GTGA…SPSK) and 192 to 217 (FSEE…PAPN).

It is found in the cell membrane. In terms of biological role, may be involved in the stabilization of the cell envelope or may interact with the sensor protein CseC to modulate its activity, in response to cell envelope stress. This chain is Lipoprotein CseA (cseA), found in Streptomyces avermitilis (strain ATCC 31267 / DSM 46492 / JCM 5070 / NBRC 14893 / NCIMB 12804 / NRRL 8165 / MA-4680).